The following is a 245-amino-acid chain: Orotidine 5'-phosphate decarboxylase (245 aa).

Residues Asp-22, Lys-44, 71 to 80, Thr-131, Arg-192, Gln-201, Gly-221, and Arg-222 contribute to the substrate site; that span reads DLKFHDIPNT. The active-site Proton donor is the Lys-73.

The protein belongs to the OMP decarboxylase family. Type 1 subfamily. As to quaternary structure, homodimer.

The enzyme catalyses orotidine 5'-phosphate + H(+) = UMP + CO2. It functions in the pathway pyrimidine metabolism; UMP biosynthesis via de novo pathway; UMP from orotate: step 2/2. Functionally, catalyzes the decarboxylation of orotidine 5'-monophosphate (OMP) to uridine 5'-monophosphate (UMP). This Salmonella newport (strain SL254) protein is Orotidine 5'-phosphate decarboxylase.